The chain runs to 76 residues: Serine proteinase inhibitor IA-2 (76 aa).

Serine 1 is subject to N-acetylserine.

The protein belongs to the protease inhibitor I9 family.

Specifically inhibits an intracellular serine proteinase (proteinase A). In Pleurotus ostreatus (Oyster mushroom), this protein is Serine proteinase inhibitor IA-2.